The sequence spans 697 residues: Polyribonucleotide nucleotidyltransferase (697 aa).

Residues Asp490 and Asp496 each contribute to the Mg(2+) site. Residues 557–616 (PKVVTMTIKPEKIRDVIGPGGKKINEIIDETGVKLDIEQDGTIFIGAVDKDAIARARSII) enclose the KH domain. Positions 626-694 (GQVYEGKVKR…KQGRVNASHK (69 aa)) constitute an S1 motif domain.

This sequence belongs to the polyribonucleotide nucleotidyltransferase family. The cofactor is Mg(2+).

It is found in the cytoplasm. It carries out the reaction RNA(n+1) + phosphate = RNA(n) + a ribonucleoside 5'-diphosphate. Its function is as follows. Involved in mRNA degradation. Catalyzes the phosphorolysis of single-stranded polyribonucleotides processively in the 3'- to 5'-direction. The protein is Polyribonucleotide nucleotidyltransferase of Staphylococcus saprophyticus subsp. saprophyticus (strain ATCC 15305 / DSM 20229 / NCIMB 8711 / NCTC 7292 / S-41).